Here is a 30-residue protein sequence, read N- to C-terminus: Dendrotoxin A (30 aa).

A disulfide bond links cysteine 3 and cysteine 22.

Belongs to the three-finger toxin family. Short-chain subfamily. Acn-esterase inhibitor sub-subfamily. In terms of processing, contains 4 disulfide bonds. In terms of tissue distribution, expressed by the venom gland.

The protein resides in the secreted. In terms of biological role, inhibits acetylcholinesterase. Has been described to inhibit both the slowly and the rapidly inactivating phases of potassium efflux. This Dendroaspis angusticeps (Eastern green mamba) protein is Dendrotoxin A.